We begin with the raw amino-acid sequence, 840 residues long: Mechanosensitive ion channel protein Msy2 (840 aa).

The Cytoplasmic portion of the chain corresponds to Met-1–Arg-68. Residues Trp-69 to Ser-89 form a helical membrane-spanning segment. Residues Pro-90–Arg-100 lie on the Lumenal side of the membrane. The chain crosses the membrane as a helical span at residues Ile-101 to Ile-121. Residues Ala-122–Pro-126 lie on the Cytoplasmic side of the membrane. Residues Tyr-127–Leu-147 traverse the membrane as a helical segment. Residues Thr-148–Glu-151 are Lumenal-facing. The helical transmembrane segment at Met-152–Ile-172 threads the bilayer. At Gly-173–Gly-225 the chain is on the cytoplasmic side. Residues Ala-226–Phe-246 form a helical membrane-spanning segment. Topologically, residues His-247 to Gly-449 are lumenal. The EF-hand domain maps to Ile-392 to Glu-427. A helical membrane pass occupies residues Leu-450–Ala-491. The Cytoplasmic portion of the chain corresponds to Gln-492–Tyr-840. Disordered stretches follow at residues Glu-677–Asp-730 and Glu-775–Ala-819. Positions Ser-688–Ser-700 are enriched in low complexity. Residues Ser-708–Asp-730 are compositionally biased toward basic and acidic residues. Over residues Ser-776 to Ala-819 the composition is skewed to low complexity.

It belongs to the MscS (TC 1.A.23) family.

Its subcellular location is the endoplasmic reticulum membrane. Its function is as follows. Regulates intracellular calcium levels and cell volume for survival in response to hypo-osmotic shock. Involved in maintaining vacuole integrity and protecting the nuclear envelope upon hypo-osmotic shock. This Schizosaccharomyces pombe (strain 972 / ATCC 24843) (Fission yeast) protein is Mechanosensitive ion channel protein Msy2.